Reading from the N-terminus, the 324-residue chain is Probable 6-phosphogluconolactonase 4, chloroplastic (324 aa).

The transit peptide at 1–61 (MSVSAAVAAA…RAPAMATDCA (61 aa)) directs the protein to the chloroplast. The interval 20-43 (RRRSPPASRVAATSRGRPFSSGPH) is disordered. Residues 24–34 (PPASRVAATSR) are compositionally biased toward low complexity.

Belongs to the glucosamine/galactosamine-6-phosphate isomerase family. 6-phosphogluconolactonase subfamily.

Its subcellular location is the plastid. It localises to the chloroplast. It carries out the reaction 6-phospho-D-glucono-1,5-lactone + H2O = 6-phospho-D-gluconate + H(+). Its pathway is carbohydrate degradation; pentose phosphate pathway; D-ribulose 5-phosphate from D-glucose 6-phosphate (oxidative stage): step 2/3. Its function is as follows. Hydrolysis of 6-phosphogluconolactone to 6-phosphogluconate. The protein is Probable 6-phosphogluconolactonase 4, chloroplastic of Oryza sativa subsp. indica (Rice).